Here is a 1391-residue protein sequence, read N- to C-terminus: DNA-directed RNA polymerase subunit beta' (1391 aa).

Residues Cys-72, Cys-74, Cys-87, and Cys-90 each coordinate Zn(2+). Mg(2+)-binding residues include Asp-462, Asp-464, and Asp-466. Residues Cys-816, Cys-890, Cys-897, and Cys-900 each coordinate Zn(2+).

Belongs to the RNA polymerase beta' chain family. The RNAP catalytic core consists of 2 alpha, 1 beta, 1 beta' and 1 omega subunit. When a sigma factor is associated with the core the holoenzyme is formed, which can initiate transcription. Mg(2+) is required as a cofactor. Requires Zn(2+) as cofactor.

The enzyme catalyses RNA(n) + a ribonucleoside 5'-triphosphate = RNA(n+1) + diphosphate. Functionally, DNA-dependent RNA polymerase catalyzes the transcription of DNA into RNA using the four ribonucleoside triphosphates as substrates. This chain is DNA-directed RNA polymerase subunit beta', found in Neisseria meningitidis serogroup C (strain 053442).